Reading from the N-terminus, the 250-residue chain is Probable transcriptional regulatory protein Cvib_1432 (250 aa).

The protein belongs to the TACO1 family.

The protein localises to the cytoplasm. The sequence is that of Probable transcriptional regulatory protein Cvib_1432 from Chlorobium phaeovibrioides (strain DSM 265 / 1930) (Prosthecochloris vibrioformis (strain DSM 265)).